The sequence spans 342 residues: Deoxyguanosinetriphosphate triphosphohydrolase-like protein (342 aa).

Residues R75–V190 form the HD domain.

This sequence belongs to the dGTPase family. Type 2 subfamily.

The chain is Deoxyguanosinetriphosphate triphosphohydrolase-like protein from Clostridium perfringens (strain SM101 / Type A).